A 323-amino-acid polypeptide reads, in one-letter code: tRNA dimethylallyltransferase (323 aa).

Residue 12–19 participates in ATP binding; sequence GPTAAGKT. 14 to 19 serves as a coordination point for substrate; the sequence is TAAGKT. Interaction with substrate tRNA stretches follow at residues 37-40 and 161-165; these read DSAL and QRLIR.

It belongs to the IPP transferase family. As to quaternary structure, monomer. Mg(2+) is required as a cofactor.

The enzyme catalyses adenosine(37) in tRNA + dimethylallyl diphosphate = N(6)-dimethylallyladenosine(37) in tRNA + diphosphate. Catalyzes the transfer of a dimethylallyl group onto the adenine at position 37 in tRNAs that read codons beginning with uridine, leading to the formation of N6-(dimethylallyl)adenosine (i(6)A). The polypeptide is tRNA dimethylallyltransferase (Pseudomonas putida (strain ATCC 700007 / DSM 6899 / JCM 31910 / BCRC 17059 / LMG 24140 / F1)).